A 526-amino-acid polypeptide reads, in one-letter code: Bifunctional purine biosynthesis protein PurH (526 aa).

In terms of domain architecture, MGS-like spans 1–145 (MSKAPLALLS…KNHAHVGIVT (145 aa)).

This sequence belongs to the PurH family.

The catalysed reaction is (6R)-10-formyltetrahydrofolate + 5-amino-1-(5-phospho-beta-D-ribosyl)imidazole-4-carboxamide = 5-formamido-1-(5-phospho-D-ribosyl)imidazole-4-carboxamide + (6S)-5,6,7,8-tetrahydrofolate. It catalyses the reaction IMP + H2O = 5-formamido-1-(5-phospho-D-ribosyl)imidazole-4-carboxamide. Its pathway is purine metabolism; IMP biosynthesis via de novo pathway; 5-formamido-1-(5-phospho-D-ribosyl)imidazole-4-carboxamide from 5-amino-1-(5-phospho-D-ribosyl)imidazole-4-carboxamide (10-formyl THF route): step 1/1. It participates in purine metabolism; IMP biosynthesis via de novo pathway; IMP from 5-formamido-1-(5-phospho-D-ribosyl)imidazole-4-carboxamide: step 1/1. The polypeptide is Bifunctional purine biosynthesis protein PurH (Psychrobacter cryohalolentis (strain ATCC BAA-1226 / DSM 17306 / VKM B-2378 / K5)).